Consider the following 39-residue polypeptide: Antimicrobial peptide CHP1 (39 aa).

Intrachain disulfides connect Cys-6/Cys-28, Cys-13/Cys-34, and Cys-18/Cys-35.

Bactericidal activity; inhibits S.aureus and E.coli. In Gallus gallus (Chicken), this protein is Antimicrobial peptide CHP1.